An 890-amino-acid chain; its full sequence is Kinesin-like protein KIN-7C, mitochondrial (890 aa).

Positions methionine 1–serine 13 are enriched in polar residues. Residues methionine 1–alanine 66 are disordered. Residues methionine 1–lysine 73 constitute a mitochondrion transit peptide. Low complexity predominate over residues serine 40 to alanine 66. The 320-residue stretch at asparagine 75–valine 394 folds into the Kinesin motor domain. Residue glycine 155–threonine 162 coordinates ATP. Positions glutamate 395–leucine 468 form a coiled coil. The segment at aspartate 511–isoleucine 595 is disordered. Over residues serine 569–serine 579 the composition is skewed to low complexity. Coiled-coil stretches lie at residues histidine 664–isoleucine 693 and alanine 729–arginine 765. Residues threonine 768–threonine 797 form a disordered region. Residues asparagine 818–glutamate 884 are a coiled coil.

This sequence belongs to the TRAFAC class myosin-kinesin ATPase superfamily. Kinesin family. KIN-7 subfamily.

It is found in the mitochondrion. This chain is Kinesin-like protein KIN-7C, mitochondrial, found in Arabidopsis thaliana (Mouse-ear cress).